A 90-amino-acid chain; its full sequence is High mobility group nucleosome-binding domain-containing protein 4 (90 aa).

Residues 1–90 (MPKRKAKGDA…QKAEGTGDAK (90 aa)) form a disordered region. Residues 7-23 (KGDAKGDKGKVKDEPQR) are compositionally biased toward basic and acidic residues. ADP-ribosylserine is present on Ser29. A compositionally biased stretch (basic and acidic residues) spans 37–64 (PEPRPKKAPAKKGEKLAKGRKGKAEVSK). Residues 65–83 (DGNNPAKNRDASTVQSQKA) show a composition bias toward polar residues. Residue Ser80 is modified to Phosphoserine. An N6-acetyllysine modification is found at Lys82.

Belongs to the HMGN family.

It localises to the nucleus. The polypeptide is High mobility group nucleosome-binding domain-containing protein 4 (HMGN4) (Bos taurus (Bovine)).